The sequence spans 375 residues: Succinyl-diaminopimelate desuccinylase (375 aa).

Residue His-66 coordinates Zn(2+). Asp-68 is an active-site residue. Asp-99 serves as a coordination point for Zn(2+). The Proton acceptor role is filled by Glu-133. Zn(2+)-binding residues include Glu-134, Glu-162, and His-348.

The protein belongs to the peptidase M20A family. DapE subfamily. In terms of assembly, homodimer. The cofactor is Zn(2+). Co(2+) serves as cofactor.

The enzyme catalyses N-succinyl-(2S,6S)-2,6-diaminopimelate + H2O = (2S,6S)-2,6-diaminopimelate + succinate. Its pathway is amino-acid biosynthesis; L-lysine biosynthesis via DAP pathway; LL-2,6-diaminopimelate from (S)-tetrahydrodipicolinate (succinylase route): step 3/3. Functionally, catalyzes the hydrolysis of N-succinyl-L,L-diaminopimelic acid (SDAP), forming succinate and LL-2,6-diaminopimelate (DAP), an intermediate involved in the bacterial biosynthesis of lysine and meso-diaminopimelic acid, an essential component of bacterial cell walls. This Shigella dysenteriae serotype 1 (strain Sd197) protein is Succinyl-diaminopimelate desuccinylase.